The primary structure comprises 814 residues: MEPDPKKIKLDIFNFPTARETRTPEEVAESYAEAVKSHPFYDNVHSVIDFYDSGTIKDGRGQIIGVVLREALPKYAVSMASELLASAAVRTSLRSMMFGGESPLSGIAGYFDYRGSPVELKSRKTSFTYEHEAAWPAVFPVVDYVSELYRHVAPERWKAQNDAIPDVVRIHGTPFSTLTINSRFRTASHTDVGDFDGGYSCIACLDGHFKGLALAFDDFGINVLMQPRDVMIFDSHHFHSNTEVELSFSGEDWKRLTCVFYYRAALGEPASYAEYQRRLEKSKQDNSFTPVVSNVRVKENGTNLNRPSPVYPICPSPFWVPMVAHCLQHCASEAQCVHDAMTADGSRLAEVMFGEPLSTSDGIPLRGEDKKLKANSDSASRPLSRLGGFSETNLMVSTAVEKKKYLNSEFLSHFISAQLLDMWKQARGKWLELVGREWTHMLALNPERKDFLWKNQSEMNSAFFDLCEVGKQVMLGLLGKEVALPKEEQAFWTMYAVHLNAACAEELHMPHVAMSLRKLNVKLKDFNFGGTRYFKDMPPEEQKRRMERKQRIEEARRHGMSSGAHEKRANWLTNDSFDYQTEDCVVDYAQHKWPPPALHAKEITKNVRTGELPTREGVVRVLVVLPDPQSKLECVDCKLEVPETVRCSCEWERLMSSLAVRRVLAAAQRNLQLPGSVTHGNIEIRFAFHSRLPTDMCDFVVLQHVLSCIPDDVLASAYIRRAAALCTGCVYVVETDVQCRQYYTLKCAARCDYDAVASLFFQQLHRVSYGTKAARVRTKGELESLIPTVCCARYKLQGSPLNTTVHVVSPAPSR.

The interval 62 to 264 is thymine dioxygenase; sequence QIIGVVLREA…RLTCVFYYRA (203 aa). Residues His189, Asp191, and His239 each contribute to the Fe cation site. Arg255 serves as a coordination point for 2-oxoglutarate. Positions 392–561 are DNA-binding JBP1 domain; the sequence is TNLMVSTAVE…IEEARRHGMS (170 aa).

The protein belongs to the TET family. JBP1 subfamily. In terms of assembly, monomer. Binds to DNA as a monomer. Fe(2+) is required as a cofactor.

Its subcellular location is the nucleus. The catalysed reaction is thymine + 2-oxoglutarate + O2 = 5-hydroxymethyluracil + succinate + CO2. Its function is as follows. Dioxygenase that catalyzes the first step of DNA base J (beta-d-glucosyl-HOMedU) biosynthesis by converting thymine to 5-hydroxymethyluracil (HOMedU). DNA base J is a hypermodified thymidine residue found in the genome of kinetoplastid parasites, which is localized primarily to repetitive DNA, namely the telomeres, and is implicated in the regulation of antigenic variation. Also specifically binds to base J-containing DNA (J-DNA). Involved in propagation and maintenance of DNA base J synthesis initiated by JBP2 by specifically binding already synthesized DNA base J and propagating J synthesis. Thymine dioxygenase activity and J-DNA-binding are independent functions. In Leishmania major, this protein is Thymine dioxygenase JBP1 (JBP1).